The primary structure comprises 878 residues: Enoyl-CoA isomerase/hydratase claC (878 aa).

A disordered region spans residues 541–561; sequence VGPASTEATSPVVEPSTMESD. Substrate-binding positions include 677-681 and Gly724; that span reads AGADL.

The protein belongs to the enoyl-CoA hydratase/isomerase family.

Its pathway is secondary metabolite biosynthesis. Functionally, enoyl-CoA isomerase/hydratase; part of the cla gene cluster that produces clavatol and ortho-quinone methide. The clavatol biosynthesis cluster cla and the terrestric acid cluster tra are both involved in the production of peniphenones and penilactones. The non-reducing PKS claF is responsible for the formation of clavatol from successive condensations of 3 malonyl-CoA units, presumably with a simple acetyl-CoA starter unit, and 2 methylation steps. The esterase claE probably collaborates with claF by catalyzing the hydrolysis of ACP-bound acyl intermediates to free the ACP from stalled intermediates. The clavatol oxidase claD then converts clavatol to hydroxyclavatol. Spontaneous dehydration of hydroxyclavatol leads to the accumulation of the highly active ortho-quinone methide. On the other hand, the PKS-NRPS hybrid traA is involved in the formation of crustosic acid, with the help of traB and traD. The polyketide synthase module (PKS) of traA is responsible for the synthesis of the polyketide backbone via the condensation of an acetyl-CoA starter unit with 3 malonyl-CoA units. The downstream nonribosomal peptide synthetase (NRPS) module then amidates the carboxyl end of the polyketide with L-malic acid. Because traA lacks a designated enoylreductase (ER) domain, the required activity is provided the enoyl reductase traG. Crustosic acid undergoes decarboxylation and isomerization to the terrestric acid, catalyzed by the 2-oxoglutarate-dependent dioxygenase traH. Both acids are further converted to the 2 gamma-butyrolactones (R)-5-methyltetronic acid and (S)-5-carboxylmethyltetronic acid, with involvement of the cytochrome P450 monooxygenase claJ. Spontaneous addition of the methide to these gamma-butyrolactones leads to peniphenone D and penilactone D, which undergo again stereospecific attacking by methide to give penilactones A and B. The function of the enoyl-CoA isomerase/hydratase claC has not been investigated yet. The chain is Enoyl-CoA isomerase/hydratase claC from Penicillium crustosum (Blue mold fungus).